The sequence spans 284 residues: MDAIKKKMVAMKMEKENALDRAEQLEQKLRETEEAKAKIEDDYNSLQKKSIQTENDLDNTQTQLQDVQAKYETTEKQIAEHEQEIQSLTRKISMLEEDIMKSEERYTTAASKLEEASKAADESERNRKVLENLNCGNDERIDQLEKQLTEAKWIAEEADKKYEEAARKLAITEVDLERAEARLEAAEAKVIDLEEQLTVVGANIKTLQVQNDQASQREDSYEETIRDLTNRLKDAENRATEAERTVSKLRKEVDRLEDELLTEKEKYKAISDELDATFAELAGY.

Positions 1-284 form a coiled coil; sequence MDAIKKKMVA…DATFAELAGY (284 aa). Positions 32 to 41 are enriched in basic and acidic residues; the sequence is TEEAKAKIED. Residues 32–60 form a disordered region; it reads TEEAKAKIEDDYNSLQKKSIQTENDLDNT. Positions 44 to 60 are enriched in polar residues; the sequence is NSLQKKSIQTENDLDNT.

Belongs to the tropomyosin family. In terms of assembly, homodimer.

In terms of biological role, tropomyosin, in association with the troponin complex, plays a central role in the calcium dependent regulation of muscle contraction. In Mytilus edulis (Blue mussel), this protein is Tropomyosin.